The following is a 712-amino-acid chain: Polyribonucleotide nucleotidyltransferase (712 aa).

Mg(2+) contacts are provided by D493 and D499. In terms of domain architecture, KH spans 560-619 (PRLLTFKVDPEDIGKIIGPGGKTVRGITEATGAKVDISDDGTITVSSSVGGQAEAARAMI). In terms of domain architecture, S1 motif spans 629-697 (GQVYLGKVTR…HKGRINLTRL (69 aa)).

This sequence belongs to the polyribonucleotide nucleotidyltransferase family. Mg(2+) serves as cofactor.

It localises to the cytoplasm. The catalysed reaction is RNA(n+1) + phosphate = RNA(n) + a ribonucleoside 5'-diphosphate. Functionally, involved in mRNA degradation. Catalyzes the phosphorolysis of single-stranded polyribonucleotides processively in the 3'- to 5'-direction. This is Polyribonucleotide nucleotidyltransferase from Synechococcus sp. (strain JA-2-3B'a(2-13)) (Cyanobacteria bacterium Yellowstone B-Prime).